The primary structure comprises 170 residues: Viral interleukin-10 homolog (170 aa).

The N-terminal stretch at methionine 1–glycine 23 is a signal peptide. Cystine bridges form between cysteine 27–cysteine 119 and cysteine 73–cysteine 125. Residues glutamate 97 to lysine 145 adopt a coiled-coil conformation. Asparagine 127 is a glycosylation site (N-linked (GlcNAc...) asparagine; by host).

Belongs to the IL-10 family. In terms of assembly, homodimer.

Its subcellular location is the secreted. Functionally, inhibits IFN-gamma synthesis. Down-regulates the expression of the host TAP1 gene (transporter associated with antigen processing), thereby affecting the transport of peptides into the endoplasmic reticulum and subsequent peptide loading by MHC class I molecules. In consequence, infected cells are masked for immune recognition by cytotoxic T-lymphocytes. This Epstein-Barr virus (strain AG876) (HHV-4) protein is Viral interleukin-10 homolog.